We begin with the raw amino-acid sequence, 527 residues long: Coiled-coil domain-containing protein 148 (527 aa).

Coiled-coil stretches lie at residues 289 to 353 (LAKD…TEIK) and 401 to 438 (LEKR…VAVQ).

This chain is Coiled-coil domain-containing protein 148 (Ccdc148), found in Mus musculus (Mouse).